The primary structure comprises 867 residues: Ent-copalyl diphosphate synthase 1, chloroplastic (867 aa).

The transit peptide at methionine 1–arginine 35 directs the protein to the chloroplast. Positions methionine 1 to glutamine 134 are disordered. Residues arginine 51–aspartate 64 are compositionally biased toward basic and acidic residues. Residues alanine 74–serine 89 show a composition bias toward low complexity. The span at isoleucine 99 to glutamine 121 shows a compositional bias: basic and acidic residues. Over residues glutamate 124–leucine 133 the composition is skewed to acidic residues. Lysine 286 contacts substrate. Positions glutamate 418 to aspartate 421 match the DXDD motif motif. Lysine 504 serves as a coordination point for substrate.

This sequence belongs to the terpene synthase family. It depends on Mg(2+) as a cofactor.

It localises to the plastid. Its subcellular location is the chloroplast. It catalyses the reaction (2E,6E,10E)-geranylgeranyl diphosphate = ent-copalyl diphosphate. Its pathway is plant hormone biosynthesis; gibberellin biosynthesis. Its function is as follows. Catalyzes the conversion of geranylgeranyl diphosphate to the gibberellin precursor ent-copalyl diphosphate. The polypeptide is Ent-copalyl diphosphate synthase 1, chloroplastic (CPS1) (Oryza sativa subsp. japonica (Rice)).